The following is a 552-amino-acid chain: Envelope glycoprotein E (552 aa).

A signal peptide spans 1–20 (MDRGAVVGFLLGVCVVSCLA). Over 21–421 (GTPKTSWRRV…HAPPTHGALR (401 aa)) the chain is Virion surface. Residues 63-88 (CGPLHPSWXSLMPPKQVPETVVDAAC) form an interaction with gI region. An N-linked (GlcNAc...) asparagine; by host glycan is attached at Asn-124. A disordered region spans residues 162-216 (QPAPVPTPPPTPADYDEDDNDEGEGEDESLAGTPASGTPRLPPPPAPPRSWPSAP). A compositionally biased stretch (pro residues) spans 164 to 173 (APVPTPPPTP). Over residues 175 to 190 (DYDEDDNDEGEGEDES) the composition is skewed to acidic residues. Tyr-176 carries the post-translational modification Sulfotyrosine; by host. Over residues 201–211 (RLPPPPAPPRS) the composition is skewed to pro residues. Residues 237 to 382 (SPGEAFSTNV…GHITISTAAX (146 aa)) are fc-binding. Asn-245 is a glycosylation site (N-linked (GlcNAc...) asparagine; by host). Cystine bridges form between Cys-273–Cys-299, Cys-282–Cys-291, and Cys-316–Cys-325. The disordered stretch occupies residues 396-415 (GADLAEPTHPHVGAPPHAPP). Residues 405 to 415 (PHVGAPPHAPP) show a composition bias toward low complexity. A helical membrane pass occupies residues 422-442 (LGAVMGAALLLSVLGLSVWAC). At 443 to 552 (MTCWRRRAWR…SQASDSSVFW (110 aa)) the chain is on the intravirion side. Short sequence motifs (internalization motif) lie at residues 465–468 (YIRV) and 474–477 (YADW). Positions 472 to 497 (ELYADWSSDSEGERDQVPWLAPPERP) are interaction with VP22 and UL11. Ser-478 and Ser-479 each carry phosphoserine; by host CK2. The tract at residues 478-486 (SSDSEGERD) is acidic. The disordered stretch occupies residues 478–552 (SSDSEGERDQ…SQASDSSVFW (75 aa)). Phosphoserine is present on Ser-505. The segment covering 543–552 (SQASDSSVFW) has biased composition (polar residues).

This sequence belongs to the alphaherpesvirinae glycoprotein E family. As to quaternary structure, interacts with gI; this interaction enhances the Fc receptor function of gE. The heterodimer gE/gI interacts with the Fc part of host IgG. Interacts (via C-terminus) with VP22 tegument protein; this interaction is necessary for the recruitment of VP22 to the Golgi and its packaging into virions. Interacts (via C-terminus) with UL11 tegument protein. Post-translationally, phosphorylated on serines within the acidic cluster. Phosphorylation determines whether endocytosed viral gE traffics to the trans-Golgi network or recycles to the cell membrane. N-glycosylated, and sulfated.

Its subcellular location is the virion membrane. The protein resides in the host cell membrane. The protein localises to the host cell junction. It is found in the host Golgi apparatus. It localises to the host trans-Golgi network. Functionally, in epithelial cells, the heterodimer gE/gI is required for the cell-to-cell spread of the virus, by sorting nascent virions to cell junctions. Once the virus reaches the cell junctions, virus particles can spread to adjacent cells extremely rapidly through interactions with cellular receptors that accumulate at these junctions. Implicated in basolateral spread in polarized cells. In neuronal cells, gE/gI is essential for the anterograde spread of the infection throughout the host nervous system. Together with US9, the heterodimer gE/gI is involved in the sorting and transport of viral structural components toward axon tips. The heterodimer gE/gI serves as a receptor for the Fc part of host IgG. Dissociation of gE/gI from IgG occurs at acidic pH. May thus be involved in anti-HSV antibodies bipolar bridging, followed by intracellular endocytosis and degradation, thereby interfering with host IgG-mediated immune responses. This is Envelope glycoprotein E (gE) from Human herpesvirus 1 (strain F) (HHV-1).